The chain runs to 207 residues: High frequency lysogenization protein HflD homolog (207 aa).

This sequence belongs to the HflD family.

Its subcellular location is the cytoplasm. It localises to the cell inner membrane. The chain is High frequency lysogenization protein HflD homolog from Azotobacter vinelandii (strain DJ / ATCC BAA-1303).